Reading from the N-terminus, the 292-residue chain is MKGTIIKGIGGFYYIKIDNSEEIIECKARGKFRHTELTPMIGDYVEISIDKNNKGAIEKIYERRSELFRPAVANVTQALVVFSFKNPDINIDLLNKFLLLCEYNNLKAIVCFNKMDLVNKEDYKDIISMIEQAGYDIIFLNAEKERNMDIIKKLIKDNVTVFCGPSGVGKSTMLNKIIGKETMITGNISEKLKRGKHTTRHSELIYVDEGLLVDTPGFSSLDINFMEKEDLLHCIPEFRDFIGECKFTGCLHHREPNCAVKKAVEEGHIHKNRYDFYIKTLEEFMNRRKKKW.

Residues 64–221 (RSELFRPAVA…LVDTPGFSSL (158 aa)) form the CP-type G domain. GTP is bound by residues 113 to 116 (NKMD) and 164 to 172 (GPSGVGKST). Residues cysteine 245, cysteine 250, histidine 252, and cysteine 258 each contribute to the Zn(2+) site.

This sequence belongs to the TRAFAC class YlqF/YawG GTPase family. RsgA subfamily. As to quaternary structure, monomer. Associates with 30S ribosomal subunit, binds 16S rRNA. The cofactor is Zn(2+).

It is found in the cytoplasm. One of several proteins that assist in the late maturation steps of the functional core of the 30S ribosomal subunit. Helps release RbfA from mature subunits. May play a role in the assembly of ribosomal proteins into the subunit. Circularly permuted GTPase that catalyzes slow GTP hydrolysis, GTPase activity is stimulated by the 30S ribosomal subunit. The polypeptide is Small ribosomal subunit biogenesis GTPase RsgA (Clostridium botulinum (strain Okra / Type B1)).